Reading from the N-terminus, the 469-residue chain is Glutamate--tRNA ligase (469 aa).

Positions 11 to 21 (PSPTGFIHLGN) match the 'HIGH' region motif. Residues 118–131 (GEKPRYDGTWRPEP) show a composition bias toward basic and acidic residues. Positions 118-138 (GEKPRYDGTWRPEPGKVLPEP) are disordered. Positions 243–247 (KMSKR) match the 'KMSKS' region motif. Lys-246 contacts ATP.

Belongs to the class-I aminoacyl-tRNA synthetase family. Glutamate--tRNA ligase type 1 subfamily. In terms of assembly, monomer.

It localises to the cytoplasm. The enzyme catalyses tRNA(Glu) + L-glutamate + ATP = L-glutamyl-tRNA(Glu) + AMP + diphosphate. In terms of biological role, catalyzes the attachment of glutamate to tRNA(Glu) in a two-step reaction: glutamate is first activated by ATP to form Glu-AMP and then transferred to the acceptor end of tRNA(Glu). This chain is Glutamate--tRNA ligase, found in Burkholderia thailandensis (strain ATCC 700388 / DSM 13276 / CCUG 48851 / CIP 106301 / E264).